A 166-amino-acid polypeptide reads, in one-letter code: 2-C-methyl-D-erythritol 2,4-cyclodiphosphate synthase (166 aa).

Residues Asp17 and His19 each contribute to the a divalent metal cation site. Residues 17–19 (DSH) and 43–44 (HS) contribute to the 4-CDP-2-C-methyl-D-erythritol 2-phosphate site. A divalent metal cation is bound at residue His51. Residues 65–67 (DIG), 109–115 (AQKPKMA), and Arg151 each bind 4-CDP-2-C-methyl-D-erythritol 2-phosphate.

The protein belongs to the IspF family. In terms of assembly, homotrimer. The cofactor is a divalent metal cation.

It carries out the reaction 4-CDP-2-C-methyl-D-erythritol 2-phosphate = 2-C-methyl-D-erythritol 2,4-cyclic diphosphate + CMP. The protein operates within isoprenoid biosynthesis; isopentenyl diphosphate biosynthesis via DXP pathway; isopentenyl diphosphate from 1-deoxy-D-xylulose 5-phosphate: step 4/6. Its function is as follows. Involved in the biosynthesis of isopentenyl diphosphate (IPP) and dimethylallyl diphosphate (DMAPP), two major building blocks of isoprenoid compounds. Catalyzes the conversion of 4-diphosphocytidyl-2-C-methyl-D-erythritol 2-phosphate (CDP-ME2P) to 2-C-methyl-D-erythritol 2,4-cyclodiphosphate (ME-CPP) with a corresponding release of cytidine 5-monophosphate (CMP). This chain is 2-C-methyl-D-erythritol 2,4-cyclodiphosphate synthase, found in Rhodopirellula baltica (strain DSM 10527 / NCIMB 13988 / SH1).